The primary structure comprises 132 residues: Fatty acid-binding protein, intestinal (132 aa).

Residue Ala2 is modified to N-acetylalanine. Hexadecanoate contacts are provided by Trp83 and Arg107. Tetradecanoate is bound by residues Trp83 and Arg107.

It belongs to the calycin superfamily. Fatty-acid binding protein (FABP) family. In terms of tissue distribution, expressed in the small intestine and at much lower levels in the large intestine. Highest expression levels in the jejunum.

It is found in the cytoplasm. Its function is as follows. FABPs are thought to play a role in the intracellular transport of long-chain fatty acids and their acyl-CoA esters. FABP2 is probably involved in triglyceride-rich lipoprotein synthesis. Binds saturated long-chain fatty acids with a high affinity, but binds with a lower affinity to unsaturated long-chain fatty acids. FABP2 may also help maintain energy homeostasis by functioning as a lipid sensor. In Homo sapiens (Human), this protein is Fatty acid-binding protein, intestinal (FABP2).